We begin with the raw amino-acid sequence, 188 residues long: Crossover junction endodeoxyribonuclease RuvC (188 aa).

Active-site residues include D7, E68, and D141. Residues D7, E68, and D141 each contribute to the Mg(2+) site.

The protein belongs to the RuvC family. Homodimer which binds Holliday junction (HJ) DNA. The HJ becomes 2-fold symmetrical on binding to RuvC with unstacked arms; it has a different conformation from HJ DNA in complex with RuvA. In the full resolvosome a probable DNA-RuvA(4)-RuvB(12)-RuvC(2) complex forms which resolves the HJ. Requires Mg(2+) as cofactor.

Its subcellular location is the cytoplasm. It carries out the reaction Endonucleolytic cleavage at a junction such as a reciprocal single-stranded crossover between two homologous DNA duplexes (Holliday junction).. The RuvA-RuvB-RuvC complex processes Holliday junction (HJ) DNA during genetic recombination and DNA repair. Endonuclease that resolves HJ intermediates. Cleaves cruciform DNA by making single-stranded nicks across the HJ at symmetrical positions within the homologous arms, yielding a 5'-phosphate and a 3'-hydroxyl group; requires a central core of homology in the junction. The consensus cleavage sequence is 5'-(A/T)TT(C/G)-3'. Cleavage occurs on the 3'-side of the TT dinucleotide at the point of strand exchange. HJ branch migration catalyzed by RuvA-RuvB allows RuvC to scan DNA until it finds its consensus sequence, where it cleaves and resolves the cruciform DNA. The sequence is that of Crossover junction endodeoxyribonuclease RuvC from Mycobacterium tuberculosis (strain ATCC 25177 / H37Ra).